Here is a 383-residue protein sequence, read N- to C-terminus: NAD(P) transhydrogenase subunit alpha part 1 (383 aa).

NAD(+) is bound by residues 131 to 134 (QNMD), V181, 201 to 203 (DVR), and G231.

The protein belongs to the AlaDH/PNT family. As to quaternary structure, heterotrimer of two alpha chains and a beta (PntB) chain; in Rickettsia, the alpha chain is made of two subunits (PntAA and PntAB) and forms a dimer.

It carries out the reaction NAD(+) + NADPH + H(+)(in) = NADH + NADP(+) + H(+)(out). In terms of biological role, the transhydrogenation between NADH and NADP is coupled to respiration and ATP hydrolysis and functions as a proton pump across the membrane. This chain is NAD(P) transhydrogenase subunit alpha part 1 (pntAA), found in Rickettsia prowazekii (strain Madrid E).